A 287-amino-acid polypeptide reads, in one-letter code: Cuticle collagen 38 (287 aa).

Positions 1–19 are cleaved as a signal peptide; that stretch reads MSKYLVPVCASISLVAVFG. The tract at residues 95 to 287 is disordered; that stretch reads QGCPPGPPGP…CPCPARAKKH (193 aa). The span at 98-107 shows a compositional bias: pro residues; sequence PPGPPGPPGL. Collagen-like domains follow at residues 145-200 and 215-273; these read QGPP…GSEG and GQPG…SIGP. The segment covering 184–205 has biased composition (low complexity); the sequence is TGEQGPQGEPGTEGSEGPTGQD. A compositionally biased stretch (gly residues) spans 206 to 215; the sequence is GTIGGPGLPG. The segment covering 238 to 252 has biased composition (low complexity); sequence DGEQGPQGPQGPDGQ.

Belongs to the cuticular collagen family. As to quaternary structure, collagen polypeptide chains are complexed within the cuticle by disulfide bonds and other types of covalent cross-links.

It is found in the nucleus. Functionally, probable cuticular collagen-like protein. Nematode cuticles are composed largely of collagen-like proteins. The cuticle functions both as an exoskeleton and as a barrier to protect the worm from its environment. Acts downstream of the Wnt signaling pathway, perhaps in the formation of the adult cuticle. This Caenorhabditis elegans protein is Cuticle collagen 38.